We begin with the raw amino-acid sequence, 386 residues long: Short-chain dehydrogenase/reductase family 42E member 1 (386 aa).

Residue Y150 is the Proton acceptor of the active site. K154 contacts NAD(+). 2 helical membrane passes run 279–299 and 363–383; these read FPLS…FFIS and YLIW…SWLP.

This sequence belongs to the 3-beta-HSD family.

The protein localises to the membrane. This chain is Short-chain dehydrogenase/reductase family 42E member 1 (sdr42e1), found in Xenopus laevis (African clawed frog).